We begin with the raw amino-acid sequence, 588 residues long: Proline--tRNA ligase (588 aa).

This sequence belongs to the class-II aminoacyl-tRNA synthetase family. ProS type 1 subfamily. In terms of assembly, homodimer.

The protein localises to the cytoplasm. It carries out the reaction tRNA(Pro) + L-proline + ATP = L-prolyl-tRNA(Pro) + AMP + diphosphate. Functionally, catalyzes the attachment of proline to tRNA(Pro) in a two-step reaction: proline is first activated by ATP to form Pro-AMP and then transferred to the acceptor end of tRNA(Pro). As ProRS can inadvertently accommodate and process non-cognate amino acids such as alanine and cysteine, to avoid such errors it has two additional distinct editing activities against alanine. One activity is designated as 'pretransfer' editing and involves the tRNA(Pro)-independent hydrolysis of activated Ala-AMP. The other activity is designated 'posttransfer' editing and involves deacylation of mischarged Ala-tRNA(Pro). The misacylated Cys-tRNA(Pro) is not edited by ProRS. This is Proline--tRNA ligase from Corynebacterium glutamicum (strain R).